The sequence spans 175 residues: Adenine phosphoribosyltransferase (175 aa).

Belongs to the purine/pyrimidine phosphoribosyltransferase family. Homodimer.

The protein localises to the cytoplasm. The enzyme catalyses AMP + diphosphate = 5-phospho-alpha-D-ribose 1-diphosphate + adenine. It participates in purine metabolism; AMP biosynthesis via salvage pathway; AMP from adenine: step 1/1. Catalyzes a salvage reaction resulting in the formation of AMP, that is energically less costly than de novo synthesis. This Francisella tularensis subsp. tularensis (strain FSC 198) protein is Adenine phosphoribosyltransferase.